The primary structure comprises 1537 residues: DNA (cytosine-5)-methyltransferase 1 (1537 aa).

Residues 1–13 are compositionally biased toward pro residues; the sequence is MPARSAPPPPALP. Disordered regions lie at residues 1-34 and 97-232; these read MPAR…SEKE and RASN…DEKR. The DMAP1-binding domain occupies 8–105; sequence PPPALPPALR…SRASNGCAGN (98 aa). Residues 21–34 are compositionally biased toward basic and acidic residues; it reads RDLERDEDSLSEKE. Low complexity predominate over residues 129–154; that stretch reads SSSSSSSSSSSSSSSSSSSSSLLPAP. Residues 171 to 194 show a composition bias toward polar residues; it reads SPASSRVTRSSGRQPTILSVFSKG. The tract at residues 182-194 is interaction with PCNA; the sequence is GRQPTILSVFSKG. Residues 215–227 show a composition bias toward acidic residues; that stretch reads KDEEEEEELEEKE. Positions 263, 266, and 329 each coordinate Zn(2+). The residue at position 420 (Ser-420) is a Phosphoserine. A CXXC-type zinc finger spans residues 558–604; the sequence is NAMKRRRCGVCEVCQQPECGKCKACQNMVKFGGSGRSKQACLQRRCP. Positions 565, 568, 571, 576, 579, 582, 598, and 603 each coordinate Zn(2+). The tract at residues 614–638 is disordered; it reads DEEVDDNIPEMPSPKKMLQGRKKKQ. 2 BAH domains span residues 667 to 791 and 883 to 1011; these read ETLE…ETPP and HYRK…EDPP. Residues 1006-1050 are disordered; the sequence is SFEDPPNHARSSGNKGKGKGKGKGKGKGKSSTTCEQSEPEPTELK. 7 consecutive repeat copies span residues 1020–1021, 1022–1023, 1024–1025, 1026–1027, 1028–1029, 1030–1031, and 1032–1033. The segment at 1020-1035 is 8 X 2 AA tandem repeats of K-G; the sequence is KGKGKGKGKGKGKGKS. Residues 1021 to 1033 are compositionally biased toward basic residues; it reads GKGKGKGKGKGKG. An 8; approximate repeat occupies 1034–1035; sequence KS. Residues 1054-1513 enclose the SAM-dependent MTase C5-type domain; the sequence is LRTLDVFSGC…LEIRACVGAR (460 aa). S-adenosyl-L-methionine is bound by residues Ser-1061, 1065 to 1066, 1083 to 1084, 1105 to 1106, and Cys-1106; these read GL, EM, and DC. Residue Cys-1141 is part of the active site. S-adenosyl-L-methionine-binding residues include Asn-1492 and Val-1494. A disordered region spans residues 1518–1537; sequence SGAAVAPPAPEKMEMTAAAD.

Belongs to the class I-like SAM-binding methyltransferase superfamily. C5-methyltransferase family. In terms of assembly, homodimer. Interacts with PCNA. In terms of tissue distribution, testis and lung.

It localises to the nucleus. It catalyses the reaction a 2'-deoxycytidine in DNA + S-adenosyl-L-methionine = a 5-methyl-2'-deoxycytidine in DNA + S-adenosyl-L-homocysteine + H(+). In terms of biological role, methylates CpG residues. Preferentially methylates hemimethylated DNA. It is responsible for maintaining methylation patterns established in development. Mediates transcriptional repression by direct binding to HDAC2. Plays a role in promoter hypermethylation and transcriptional silencing of tumor suppressor genes (TSGs) or other tumor-related genes. Also required to maintain a transcriptionally repressive state of genes in undifferentiated embryonic stem cells (ESCs). Associates at promoter regions of tumor suppressor genes (TSGs) leading to their gene silencing. This Gallus gallus (Chicken) protein is DNA (cytosine-5)-methyltransferase 1 (DNMT1).